A 197-amino-acid polypeptide reads, in one-letter code: MNLIGSYQHHHHHMMPDPFIFSPGSRCHQERPYFQGWVLNPGEVSPEFPAQPPYSPEYGAVVGPSQTSGRIENLGGKLGRRKGAPPKKERRRTESINSAFAELRECIPNVPADTKLSKIKTLRLATSYIGYLMDVLAKDSEPGGTEAFKAEIKKVDGKRRREPQPTEGYWGAAPAGEKKLKGRTGWPQQVWALELNP.

2 disordered regions span residues 61–94 (VVGPSQTSGRIENLGGKLGRRKGAPPKKERRRTE) and 155–184 (VDGKRRREPQPTEGYWGAAPAGEKKLKGRT). Residues 78–90 (LGRRKGAPPKKER) are compositionally biased toward basic residues. Residues 80 to 132 (RRKGAPPKKERRRTESINSAFAELRECIPNVPADTKLSKIKTLRLATSYIGYL) enclose the bHLH domain.

As to quaternary structure, efficient DNA binding requires dimerization with another bHLH protein. Highly expressed in the adult heart and expressed at lower levels in the intestine and gall bladder.

It is found in the nucleus. It localises to the nucleolus. Its function is as follows. Plays an essential role in cardiac morphogenesis. This chain is Heart- and neural crest derivatives-expressed protein 1 (hand1), found in Xenopus laevis (African clawed frog).